The following is a 272-amino-acid chain: tRNA pseudouridine synthase A (272 aa).

Catalysis depends on D62, which acts as the Nucleophile. Y120 is a binding site for substrate.

It belongs to the tRNA pseudouridine synthase TruA family. As to quaternary structure, homodimer.

It catalyses the reaction uridine(38/39/40) in tRNA = pseudouridine(38/39/40) in tRNA. In terms of biological role, formation of pseudouridine at positions 38, 39 and 40 in the anticodon stem and loop of transfer RNAs. This chain is tRNA pseudouridine synthase A, found in Nitrosomonas europaea (strain ATCC 19718 / CIP 103999 / KCTC 2705 / NBRC 14298).